The following is a 1220-amino-acid chain: DNA-directed RNA polymerase subunit beta' (1220 aa).

Zn(2+) contacts are provided by C61, C63, C76, and C79. Mg(2+) contacts are provided by D450, D452, and D454. The tract at residues 1197-1220 is disordered; that stretch reads QPEVEQEPTPDIPKLDDVAKSFEE. The span at 1209-1220 shows a compositional bias: basic and acidic residues; that stretch reads PKLDDVAKSFEE.

Belongs to the RNA polymerase beta' chain family. As to quaternary structure, the RNAP catalytic core consists of 2 alpha, 1 beta, 1 beta' and 1 omega subunit. When a sigma factor is associated with the core the holoenzyme is formed, which can initiate transcription. It depends on Mg(2+) as a cofactor. Zn(2+) is required as a cofactor.

The catalysed reaction is RNA(n) + a ribonucleoside 5'-triphosphate = RNA(n+1) + diphosphate. DNA-dependent RNA polymerase catalyzes the transcription of DNA into RNA using the four ribonucleoside triphosphates as substrates. The chain is DNA-directed RNA polymerase subunit beta' from Leuconostoc citreum (strain KM20).